Consider the following 505-residue polypeptide: Glycerol kinase (505 aa).

Thr-12 provides a ligand contact to ADP. The ATP site is built by Thr-12, Thr-13, and Ser-14. Thr-12 is a binding site for sn-glycerol 3-phosphate. Position 16 (Arg-16) interacts with ADP. Residues Arg-82, Glu-83, Tyr-134, and Asp-249 each coordinate sn-glycerol 3-phosphate. Glycerol-binding residues include Arg-82, Glu-83, Tyr-134, Asp-249, and Gln-250. ADP contacts are provided by Thr-271 and Gly-315. Thr-271, Gly-315, Gln-319, and Gly-416 together coordinate ATP. ADP is bound by residues Gly-416 and Asn-420.

Belongs to the FGGY kinase family.

It carries out the reaction glycerol + ATP = sn-glycerol 3-phosphate + ADP + H(+). Its pathway is polyol metabolism; glycerol degradation via glycerol kinase pathway; sn-glycerol 3-phosphate from glycerol: step 1/1. Its activity is regulated as follows. Inhibited by fructose 1,6-bisphosphate (FBP). In terms of biological role, key enzyme in the regulation of glycerol uptake and metabolism. Catalyzes the phosphorylation of glycerol to yield sn-glycerol 3-phosphate. This is Glycerol kinase from Mycolicibacterium gilvum (strain PYR-GCK) (Mycobacterium gilvum (strain PYR-GCK)).